The sequence spans 716 residues: Leucine-rich repeat neuronal protein 1 (716 aa).

Positions 1–25 (MARLSTGKAACQVVLGLLITSLTES) are cleaved as a signal peptide. The LRRNT domain occupies 26 to 72 (SILTSECPQLCVCEIRPWFTPQSTYREATTVDCNDLRLTRIPGNLSS). Residues 26 to 631 (SILTSECPQL…DISDHETSTA (606 aa)) are Extracellular-facing. A glycan (N-linked (GlcNAc...) asparagine) is linked at N69. LRR repeat units lie at residues 73–95 (DTQV…QQLF), 96–117 (NLTE…GLAN), 120–141 (QLTT…CLQD), 144–165 (NLQE…AFSG), 168–189 (NLLR…WFDS), 192–213 (NLEI…NFRP), 216–237 (NLRS…ALVG), 240–261 (SLES…ALQK), and 264–285 (NLKF…DFKN). N-linked (GlcNAc...) asparagine glycosylation is found at N96 and N117. Residues 371 to 424 (NPLRCDCVIHWINSNKTNIRFMEPLSMFCAMPPEYRGQQVKEVLIQDSSEQCLP) enclose the LRRCT domain. N-linked (GlcNAc...) asparagine glycosylation occurs at N385. Residues 424 to 515 (PMISHDTFPN…GADTRVATIK (92 aa)) form the Ig-like C2-type domain. Cysteines 447 and 499 form a disulfide. Residue N517 is glycosylated (N-linked (GlcNAc...) asparagine). Positions 525–619 (QVLKIYVKQT…VNVTTKTAAF (95 aa)) constitute a Fibronectin type-III domain. The chain crosses the membrane as a helical span at residues 632–652 (LAAVMGSMFAVISLASIAIYI). The Cytoplasmic segment spans residues 653-716 (AKRFKRKNYH…VDTSRSYYMW (64 aa)). A disordered region spans residues 692–716 (SDKDKDGSADTKPTQVDTSRSYYMW). Positions 702–716 (TKPTQVDTSRSYYMW) are enriched in polar residues.

In terms of tissue distribution, expressed in brain.

The protein resides in the membrane. This Mus musculus (Mouse) protein is Leucine-rich repeat neuronal protein 1 (Lrrn1).